The sequence spans 416 residues: Serine hydroxymethyltransferase (416 aa).

(6S)-5,6,7,8-tetrahydrofolate-binding positions include Leu-118 and 122 to 124; that span reads GHL. Lys-226 is subject to N6-(pyridoxal phosphate)lysine. (6S)-5,6,7,8-tetrahydrofolate contacts are provided by residues Glu-242 and 350–352; that span reads SPF.

Belongs to the SHMT family. Homodimer. The cofactor is pyridoxal 5'-phosphate.

It is found in the cytoplasm. It catalyses the reaction (6R)-5,10-methylene-5,6,7,8-tetrahydrofolate + glycine + H2O = (6S)-5,6,7,8-tetrahydrofolate + L-serine. The protein operates within one-carbon metabolism; tetrahydrofolate interconversion. It functions in the pathway amino-acid biosynthesis; glycine biosynthesis; glycine from L-serine: step 1/1. Functionally, catalyzes the reversible interconversion of serine and glycine with tetrahydrofolate (THF) serving as the one-carbon carrier. This reaction serves as the major source of one-carbon groups required for the biosynthesis of purines, thymidylate, methionine, and other important biomolecules. Also exhibits THF-independent aldolase activity toward beta-hydroxyamino acids, producing glycine and aldehydes, via a retro-aldol mechanism. The polypeptide is Serine hydroxymethyltransferase (Helicobacter pylori (strain ATCC 700392 / 26695) (Campylobacter pylori)).